We begin with the raw amino-acid sequence, 190 residues long: Holliday junction branch migration complex subunit RuvA (190 aa).

The tract at residues 1-64 (MIGRITGTLI…EDAQLLYGFG (64 aa)) is domain I. The domain II stretch occupies residues 65–137 (SSAERSTFRE…MRGKLGADIG (73 aa)). The flexible linker stretch occupies residues 137–141 (GATPH). The interval 142–190 (AASGHQSDILNALLALGYSDKESQAALKKLPDGVDVSEGIRLALKALVR) is domain III.

The protein belongs to the RuvA family. In terms of assembly, homotetramer. Forms an RuvA(8)-RuvB(12)-Holliday junction (HJ) complex. HJ DNA is sandwiched between 2 RuvA tetramers; dsDNA enters through RuvA and exits via RuvB. An RuvB hexamer assembles on each DNA strand where it exits the tetramer. Each RuvB hexamer is contacted by two RuvA subunits (via domain III) on 2 adjacent RuvB subunits; this complex drives branch migration. In the full resolvosome a probable DNA-RuvA(4)-RuvB(12)-RuvC(2) complex forms which resolves the HJ.

The protein resides in the cytoplasm. In terms of biological role, the RuvA-RuvB-RuvC complex processes Holliday junction (HJ) DNA during genetic recombination and DNA repair, while the RuvA-RuvB complex plays an important role in the rescue of blocked DNA replication forks via replication fork reversal (RFR). RuvA specifically binds to HJ cruciform DNA, conferring on it an open structure. The RuvB hexamer acts as an ATP-dependent pump, pulling dsDNA into and through the RuvAB complex. HJ branch migration allows RuvC to scan DNA until it finds its consensus sequence, where it cleaves and resolves the cruciform DNA. The protein is Holliday junction branch migration complex subunit RuvA of Bordetella pertussis (strain Tohama I / ATCC BAA-589 / NCTC 13251).